The sequence spans 419 residues: L-rhamnose isomerase (419 aa).

Mn(2+) is bound by residues H262, D294, and D296.

It belongs to the rhamnose isomerase family. Homotetramer. The cofactor is Mn(2+).

The protein localises to the cytoplasm. It catalyses the reaction L-rhamnopyranose = L-rhamnulose. The protein operates within carbohydrate degradation; L-rhamnose degradation; glycerone phosphate from L-rhamnose: step 1/3. Catalyzes the interconversion of L-rhamnose and L-rhamnulose. The chain is L-rhamnose isomerase from Escherichia coli O17:K52:H18 (strain UMN026 / ExPEC).